A 598-amino-acid chain; its full sequence is Glutamyl-tRNA(Gln) amidotransferase subunit E (598 aa).

The protein belongs to the GatB/GatE family. GatE subfamily. In terms of assembly, heterodimer of GatD and GatE.

It catalyses the reaction L-glutamyl-tRNA(Gln) + L-glutamine + ATP + H2O = L-glutaminyl-tRNA(Gln) + L-glutamate + ADP + phosphate + H(+). Functionally, allows the formation of correctly charged Gln-tRNA(Gln) through the transamidation of misacylated Glu-tRNA(Gln) in organisms which lack glutaminyl-tRNA synthetase. The reaction takes place in the presence of glutamine and ATP through an activated gamma-phospho-Glu-tRNA(Gln). The GatDE system is specific for glutamate and does not act on aspartate. This is Glutamyl-tRNA(Gln) amidotransferase subunit E from Thermoplasma volcanium (strain ATCC 51530 / DSM 4299 / JCM 9571 / NBRC 15438 / GSS1).